We begin with the raw amino-acid sequence, 408 residues long: L,D-transpeptidase 2 (408 aa).

The first 34 residues, 1–34 (MPKVGIAAQAGRTRVRRAWLTALMMTAVMIGAVA), serve as a signal peptide directing secretion. The N-palmitoyl cysteine moiety is linked to residue C35. A lipid anchor (S-diacylglycerol cysteine) is attached at C35. Ca(2+) contacts are provided by D232, E235, and G236. The region spanning 253–378 (VIATADDNTK…VKRGDIVEVV (126 aa)) is the L,D-TPase catalytic domain. Substrate is bound by residues Y318 and 331-332 (SG). The active-site Proton donor/acceptor is H336. Residue C354 is the Nucleophile of the active site. Residue N356 coordinates substrate.

As to quaternary structure, monomer.

It localises to the cell membrane. It participates in cell wall biogenesis; peptidoglycan biosynthesis. Is irreversibly inactivated by the beta-lactams carbapenems via the formation of a covalent adduct resulting from acylation of the catalytic Cys. Its function is as follows. Generates 3-&gt;3 cross-links in peptidoglycan, catalyzing the cleavage of the mDap(3)-D-Ala(4) bond of a tetrapeptide donor stem and the formation of a bond between the carbonyl of mDap(3) of the donor stem and the side chain of mDap(3) of the acceptor stem. Is specific for donor substrates containing a stem tetrapeptide since it cannot use pentapeptide stems. Is essential for virulence in a mouse model of acute infection. The sequence is that of L,D-transpeptidase 2 (ldtB) from Mycobacterium tuberculosis (strain CDC 1551 / Oshkosh).